The chain runs to 475 residues: Equilibrative nucleoside transporter 3 (475 aa).

The Cytoplasmic segment spans residues M1–N51. The residue at position 21 (S21) is a Phosphoserine. Residues L31 to L32 carry the Dileucine internalization motif motif. A helical membrane pass occupies residues G52–V72. Topologically, residues T73–S105 are extracellular. N-linked (GlcNAc...) asparagine glycosylation is present at N84. A helical membrane pass occupies residues Y106 to V126. The Cytoplasmic portion of the chain corresponds to N127–H132. A helical membrane pass occupies residues V133 to V153. Topologically, residues R154 to R162 are extracellular. Residues G163 to N183 form a helical membrane-spanning segment. Topologically, residues S184 to Q199 are cytoplasmic. Residues A200–L220 form a helical membrane-spanning segment. Residues A221–A230 are Extracellular-facing. The chain crosses the membrane as a helical span at residues L231 to L251. Topologically, residues P252–T305 are cytoplasmic. The segment at S272–R291 is disordered. A helical transmembrane segment spans residues A306–I326. Topologically, residues S327–P340 are extracellular. The chain crosses the membrane as a helical span at residues W341 to C361. The Cytoplasmic segment spans residues G362–K377. A helical transmembrane segment spans residues L378 to Y398. Over Q399 to Y414 the chain is Extracellular. Residues P415–G437 traverse the membrane as a helical segment. At P438–S450 the chain is on the cytoplasmic side. The chain crosses the membrane as a helical span at residues V451–L471. Residues E472–I475 are Extracellular-facing.

It belongs to the SLC29A/ENT transporter (TC 2.A.57) family. Widely expressed. Highest levels in heart and liver (at protein level).

The protein resides in the lysosome membrane. Its subcellular location is the late endosome membrane. It is found in the mitochondrion membrane. It localises to the cell membrane. The enzyme catalyses adenosine(in) = adenosine(out). The catalysed reaction is guanosine(in) = guanosine(out). It carries out the reaction inosine(in) = inosine(out). It catalyses the reaction uridine(out) = uridine(in). The enzyme catalyses cytidine(in) = cytidine(out). The catalysed reaction is thymidine(in) = thymidine(out). It carries out the reaction 2'-deoxyadenosine(in) = 2'-deoxyadenosine(out). It catalyses the reaction 2'-deoxycytidine(in) = 2'-deoxycytidine(out). The enzyme catalyses guanine(out) = guanine(in). The catalysed reaction is uracil(in) = uracil(out). It carries out the reaction (R)-noradrenaline(out) = (R)-noradrenaline(in). It catalyses the reaction dopamine(out) = dopamine(in). The enzyme catalyses serotonin(out) = serotonin(in). The catalysed reaction is tyramine(in) = tyramine(out). It carries out the reaction ATP(in) = ATP(out). Functionally, uniporter that mediates the facilitative transport of nucleoside across lysosomal and mitochondrial membranes. Functions as a non-electrogenic Na(+)-independent transporter. Substrate transport is pH-dependent and enhanced under acidic condition, probably reflecting the location of the transporter in acidic intracellular compartments. Proton is not a cotransporting ion but most likely change the ionization state of the transporter which dictates transport-permissible/impermissible conformation for nucleoside translocation. May direct the nucleoside transport from lysosomes to cytosol or cytosol to mitochondria to facilitate the fundamental function of salvage synthesis of nucleic acids. Involved in the transport of nucleosides (adenosine, guanosine, uridine, thymidine, cytidine and inosine) and deoxynucleosides (deoxyadenosine, deoxycytidine). Also mediates transport of purine nucleobases (adenine, guanine) and pyrimidine nucleobases (uracil). Also able to transport monoamine neurotransmitters dopamine, serotonin, noradrenaline and tyramine. Capable of transporting ATP. Mediates nucleoside export from lysosomes in macrophages, which regulates macrophage functions and numbers. This Rattus norvegicus (Rat) protein is Equilibrative nucleoside transporter 3.